A 477-amino-acid polypeptide reads, in one-letter code: Delayed-rectifier potassium channel regulatory subunit KCNS2 (477 aa).

Topologically, residues 1–184 (MTRQSLWDVS…LALDNPGYSV (184 aa)) are cytoplasmic. A helical transmembrane segment spans residues 185-206 (LSRVFSVLSILVVLGSIITMCL). Topologically, residues 207–225 (NSLPDFQIPDSQGNPGEDP) are extracellular. Residues 226-248 (RFEIVEHFGIAWFTFELVARFAV) form a helical membrane-spanning segment. The Cytoplasmic portion of the chain corresponds to 249–259 (APDFLKFFKNA). Residues 260-280 (LNLIDLMSIVPFYITLVVNLV) form a helical membrane-spanning segment. Residues 281-290 (VESSPTLANL) are Extracellular-facing. A helical; Voltage-sensor transmembrane segment spans residues 291-311 (GRVAQVLRLMRIFRILKLARH). Topologically, residues 312–326 (STGLRSLGATLKYSY) are cytoplasmic. The chain crosses the membrane as a helical span at residues 327-348 (KEVGLLLLYLSVGISIFSVVAY). The Extracellular segment spans residues 349–361 (TIEKEENEGLATI). The segment at residues 362 to 373 (PACWWWATVSMT) is an intramembrane region (helical). The short motif at 374–379 (TVGYGD) is the Selectivity filter element. Residues 374–381 (TVGYGDVV) lie within the membrane without spanning it. At 382-388 (PGTTAGK) the chain is on the extracellular side. Residues 389–417 (LTASACILAGILVVVLPITLIFNKFSHFY) traverse the membrane as a helical segment. The Cytoplasmic portion of the chain corresponds to 418–477 (RRQKQLESAMRSCDFGDGMKEVPSVNLRDYYAHKVKSLMASLTNMSRSSPSELSLDDSLH).

It belongs to the potassium channel family. S (TC 1.A.1.2) subfamily. Kv9.2/KCNS2 sub-subfamily. Heterotetramer with KCNB1 and KCNB2. Does not form homomultimers. Detected in brain, but not in the other tissues tested. Expression was highest in the olfactory bulb, cerebral cortex, hippocampus, habenula, basolateral amygdaloid nuclei and cerebellum.

Its subcellular location is the cell membrane. In terms of biological role, potassium channel regulatory subunit that modulate the delayed rectifier voltage-gated potassium channel activity of KCNB1 and KCNB2 by altering their kinetics, expression levels, and shifting the half-inactivation potential to more polarized values. While it does not form functional channels on its own, it can form functional heterotetrameric channels with KCNB1 and KCNB2. Each regulatory subunit has unique regulatory properties that can lead to extensive inhibition, significant changes in kinetics, and/or substantial shifts in the voltage dependencies of the inactivation process. This is Delayed-rectifier potassium channel regulatory subunit KCNS2 from Mus musculus (Mouse).